The primary structure comprises 774 residues: Protein translocase subunit SecA 2 (774 aa).

ATP is bound by residues Q94, 112–116 (GEGKT), and D501.

Belongs to the SecA family. As to quaternary structure, monomer and homodimer. Part of the essential Sec protein translocation apparatus which comprises SecA, SecYEG and auxiliary proteins SecDF. Other proteins may also be involved.

It localises to the cell membrane. Its subcellular location is the cytoplasm. The catalysed reaction is ATP + H2O + cellular proteinSide 1 = ADP + phosphate + cellular proteinSide 2.. Its function is as follows. Part of the Sec protein translocase complex. Interacts with the SecYEG preprotein conducting channel. Has a central role in coupling the hydrolysis of ATP to the transfer of proteins into and across the cell membrane, serving as an ATP-driven molecular motor driving the stepwise translocation of polypeptide chains across the membrane. The sequence is that of Protein translocase subunit SecA 2 from Mycobacterium sp. (strain JLS).